The sequence spans 333 residues: Dihydroorotate dehydrogenase (quinone) (333 aa).

FMN is bound by residues 56–60 (AGLDK) and threonine 80. Lysine 60 lines the substrate pocket. 105-109 (NRMGF) lines the substrate pocket. FMN contacts are provided by asparagine 133 and asparagine 166. Residue asparagine 166 participates in substrate binding. Residue serine 169 is the Nucleophile of the active site. Asparagine 171 contributes to the substrate binding site. FMN-binding residues include lysine 211 and threonine 239. 240 to 241 (NT) is a substrate binding site. FMN is bound by residues glycine 262, glycine 291, and 312-313 (YS).

Belongs to the dihydroorotate dehydrogenase family. Type 2 subfamily. Monomer. It depends on FMN as a cofactor.

The protein resides in the cell membrane. It carries out the reaction (S)-dihydroorotate + a quinone = orotate + a quinol. It functions in the pathway pyrimidine metabolism; UMP biosynthesis via de novo pathway; orotate from (S)-dihydroorotate (quinone route): step 1/1. Catalyzes the conversion of dihydroorotate to orotate with quinone as electron acceptor. The polypeptide is Dihydroorotate dehydrogenase (quinone) (Legionella pneumophila (strain Corby)).